The chain runs to 396 residues: L-lactate dehydrogenase (396 aa).

An FMN hydroxy acid dehydrogenase domain is found at 1-380 (MIISAASDYR…SGDSLVQELG (380 aa)). Tyr24 contacts substrate. FMN contacts are provided by Ser106 and Gln127. Tyr129 serves as a coordination point for substrate. Thr155 lines the FMN pocket. Position 164 (Arg164) interacts with substrate. Lys251 is a binding site for FMN. The active-site Proton acceptor is His275. Arg278 lines the substrate pocket. 306-330 (DSGIRNGLDVVRMIALGADTVLLGR) provides a ligand contact to FMN.

The protein belongs to the FMN-dependent alpha-hydroxy acid dehydrogenase family. FMN is required as a cofactor.

The protein resides in the cell inner membrane. It catalyses the reaction (S)-lactate + A = pyruvate + AH2. Its function is as follows. Catalyzes the conversion of L-lactate to pyruvate. Is coupled to the respiratory chain. The chain is L-lactate dehydrogenase from Salmonella enteritidis PT4 (strain P125109).